The following is a 267-amino-acid chain: Ribosomal RNA small subunit methyltransferase A (267 aa).

S-adenosyl-L-methionine is bound by residues His-13, Leu-15, Gly-40, Glu-61, Asp-85, and Asn-105.

The protein belongs to the class I-like SAM-binding methyltransferase superfamily. rRNA adenine N(6)-methyltransferase family. RsmA subfamily.

It localises to the cytoplasm. It catalyses the reaction adenosine(1518)/adenosine(1519) in 16S rRNA + 4 S-adenosyl-L-methionine = N(6)-dimethyladenosine(1518)/N(6)-dimethyladenosine(1519) in 16S rRNA + 4 S-adenosyl-L-homocysteine + 4 H(+). Functionally, specifically dimethylates two adjacent adenosines (A1518 and A1519) in the loop of a conserved hairpin near the 3'-end of 16S rRNA in the 30S particle. May play a critical role in biogenesis of 30S subunits. In Bacteroides thetaiotaomicron (strain ATCC 29148 / DSM 2079 / JCM 5827 / CCUG 10774 / NCTC 10582 / VPI-5482 / E50), this protein is Ribosomal RNA small subunit methyltransferase A.